Reading from the N-terminus, the 177-residue chain is Coatomer subunit zeta-1 (177 aa).

It belongs to the adaptor complexes small subunit family. As to quaternary structure, oligomeric complex that consists of at least the alpha, beta, beta', gamma, delta, epsilon and zeta subunits.

The protein resides in the cytoplasm. It is found in the golgi apparatus membrane. It localises to the cytoplasmic vesicle. The protein localises to the COPI-coated vesicle membrane. Functionally, the coatomer is a cytosolic protein complex that binds to dilysine motifs and reversibly associates with Golgi non-clathrin-coated vesicles, which further mediate biosynthetic protein transport from the ER, via the Golgi up to the trans Golgi network. Coatomer complex is required for budding from Golgi membranes, and is essential for the retrograde Golgi-to-ER transport of dilysine-tagged proteins. The zeta subunit may be involved in regulating the coat assembly and, hence, the rate of biosynthetic protein transport due to its association-dissociation properties with the coatomer complex. The polypeptide is Coatomer subunit zeta-1 (COPZ1) (Oryza sativa subsp. japonica (Rice)).